A 576-amino-acid chain; its full sequence is Putative diflavin flavoprotein A 1 (576 aa).

A zinc metallo-hydrolase region spans residues 48 to 240; sequence RNGTTYNSFL…LAIKTVATGH (193 aa). Positions 97, 99, 101, 164, 183, and 240 each coordinate Fe cation. The Flavodoxin-like domain occupies 269–431; the sequence is VALFYAEDYG…DLEKALGRIS (163 aa). Positions 432–576 are flavodoxin-reductase-like; sequence TGLYIITTKK…VHHRKVGNHY (145 aa).

This sequence in the N-terminal section; belongs to the zinc metallo-hydrolase group 3 family. The protein in the C-terminal section; belongs to the flavodoxin reductase family. The cofactor is Fe cation.

Its function is as follows. Mediates electron transfer from NADH to oxygen, reducing it to water. This modular protein has 3 redox cofactors, in other organisms the same activity requires 2 or 3 proteins. This Nostoc sp. (strain PCC 7120 / SAG 25.82 / UTEX 2576) protein is Putative diflavin flavoprotein A 1 (dfa1).